Consider the following 101-residue polypeptide: Urease subunit beta (101 aa).

It belongs to the urease beta subunit family. Heterotrimer of UreA (gamma), UreB (beta) and UreC (alpha) subunits. Three heterotrimers associate to form the active enzyme.

The protein localises to the cytoplasm. It catalyses the reaction urea + 2 H2O + H(+) = hydrogencarbonate + 2 NH4(+). Its pathway is nitrogen metabolism; urea degradation; CO(2) and NH(3) from urea (urease route): step 1/1. The sequence is that of Urease subunit beta from Burkholderia orbicola (strain MC0-3).